A 204-amino-acid chain; its full sequence is Nucleoside triphosphate pyrophosphatase (204 aa).

Asp-78 (proton acceptor) is an active-site residue.

The protein belongs to the Maf family. A divalent metal cation serves as cofactor.

The protein localises to the cytoplasm. The catalysed reaction is a ribonucleoside 5'-triphosphate + H2O = a ribonucleoside 5'-phosphate + diphosphate + H(+). It catalyses the reaction a 2'-deoxyribonucleoside 5'-triphosphate + H2O = a 2'-deoxyribonucleoside 5'-phosphate + diphosphate + H(+). Its function is as follows. Nucleoside triphosphate pyrophosphatase. May have a dual role in cell division arrest and in preventing the incorporation of modified nucleotides into cellular nucleic acids. The polypeptide is Nucleoside triphosphate pyrophosphatase (Prochlorococcus marinus (strain MIT 9215)).